Here is a 234-residue protein sequence, read N- to C-terminus: Heme-copper oxidase subunit 2 (234 aa).

A run of 2 helical transmembrane segments spans residues 13–33 and 72–92; these read LFLL…AFFI and LLFV…DETL. The Cu cation site is built by His-151, Cys-188, Cys-192, and His-196.

It belongs to the cytochrome c oxidase subunit 2 family.

Its subcellular location is the cell membrane. This Aeropyrum pernix (strain ATCC 700893 / DSM 11879 / JCM 9820 / NBRC 100138 / K1) protein is Heme-copper oxidase subunit 2 (aoxA).